The following is a 429-amino-acid chain: Gamma-glutamyl phosphate reductase (429 aa).

The protein belongs to the gamma-glutamyl phosphate reductase family.

Its subcellular location is the cytoplasm. It carries out the reaction L-glutamate 5-semialdehyde + phosphate + NADP(+) = L-glutamyl 5-phosphate + NADPH + H(+). Its pathway is amino-acid biosynthesis; L-proline biosynthesis; L-glutamate 5-semialdehyde from L-glutamate: step 2/2. Functionally, catalyzes the NADPH-dependent reduction of L-glutamate 5-phosphate into L-glutamate 5-semialdehyde and phosphate. The product spontaneously undergoes cyclization to form 1-pyrroline-5-carboxylate. The polypeptide is Gamma-glutamyl phosphate reductase (Rhizorhabdus wittichii (strain DSM 6014 / CCUG 31198 / JCM 15750 / NBRC 105917 / EY 4224 / RW1) (Sphingomonas wittichii)).